The following is a 66-amino-acid chain: MPKMKTKSSAKKRFKMTATGKVRAGQAGKRHGMIKRTTKFIRTARGTTILSAPDAKIVKSYMPYSR.

Residues 1–15 (MPKMKTKSSAKKRFK) are compositionally biased toward basic residues. The interval 1–32 (MPKMKTKSSAKKRFKMTATGKVRAGQAGKRHG) is disordered.

The protein belongs to the bacterial ribosomal protein bL35 family.

This is Large ribosomal subunit protein bL35 from Dinoroseobacter shibae (strain DSM 16493 / NCIMB 14021 / DFL 12).